The sequence spans 380 residues: Spore coat protein B (380 aa).

The interval 224 to 364 (GPKGSYKKED…SSGKQKEDYS (141 aa)) is disordered. The span at 229 to 248 (YKKEDQKNEQNQEDNNDKDS) shows a compositional bias: basic and acidic residues. 3 stretches are compositionally biased toward low complexity: residues 275–288 (SKSG…SSSK), 296–315 (SSDY…SSSK), and 338–356 (SSDY…IKSS).

This chain is Spore coat protein B (cotB), found in Bacillus subtilis (strain 168).